The chain runs to 151 residues: Small ribosomal subunit protein uS13 (151 aa).

This sequence belongs to the universal ribosomal protein uS13 family. As to quaternary structure, part of the 30S ribosomal subunit. Forms a loose heterodimer with protein S19. Forms two bridges to the 50S subunit in the 70S ribosome.

Located at the top of the head of the 30S subunit, it contacts several helices of the 16S rRNA. In the 70S ribosome it contacts the 23S rRNA (bridge B1a) and protein L5 of the 50S subunit (bridge B1b), connecting the 2 subunits; these bridges are implicated in subunit movement. This chain is Small ribosomal subunit protein uS13, found in Staphylothermus marinus (strain ATCC 43588 / DSM 3639 / JCM 9404 / F1).